The sequence spans 417 residues: UDP-N-acetylglucosamine 1-carboxyvinyltransferase (417 aa).

22 to 23 (KN) is a binding site for phosphoenolpyruvate. Arg-92 serves as a coordination point for UDP-N-acetyl-alpha-D-glucosamine. The active-site Proton donor is Cys-116. Cys-116 is modified (2-(S-cysteinyl)pyruvic acid O-phosphothioketal). The UDP-N-acetyl-alpha-D-glucosamine site is built by Asp-304 and Ile-326.

The protein belongs to the EPSP synthase family. MurA subfamily.

It is found in the cytoplasm. The enzyme catalyses phosphoenolpyruvate + UDP-N-acetyl-alpha-D-glucosamine = UDP-N-acetyl-3-O-(1-carboxyvinyl)-alpha-D-glucosamine + phosphate. The protein operates within cell wall biogenesis; peptidoglycan biosynthesis. Functionally, cell wall formation. Adds enolpyruvyl to UDP-N-acetylglucosamine. The polypeptide is UDP-N-acetylglucosamine 1-carboxyvinyltransferase (Desulforapulum autotrophicum (strain ATCC 43914 / DSM 3382 / VKM B-1955 / HRM2) (Desulfobacterium autotrophicum)).